The chain runs to 182 residues: ATP-dependent protease subunit HslV (182 aa).

Residue Thr12 is part of the active site. Residues Gly167, Cys170, and Thr173 each contribute to the Na(+) site.

This sequence belongs to the peptidase T1B family. HslV subfamily. In terms of assembly, a double ring-shaped homohexamer of HslV is capped on each side by a ring-shaped HslU homohexamer. The assembly of the HslU/HslV complex is dependent on binding of ATP.

It is found in the cytoplasm. The enzyme catalyses ATP-dependent cleavage of peptide bonds with broad specificity.. With respect to regulation, allosterically activated by HslU binding. Its function is as follows. Protease subunit of a proteasome-like degradation complex believed to be a general protein degrading machinery. The sequence is that of ATP-dependent protease subunit HslV from Acidiphilium cryptum (strain JF-5).